Here is a 276-residue protein sequence, read N- to C-terminus: MPVKGFKPYSPGRRQMTVSTFEEITKTTPERSLLAPLKSKAGRNNQGKLTVRHQGGGHKRKYRLIDFKRNKDSVPAKVASIEYDPNRSANIALLHYLDGHKAYILAPNGLQVGQMVVSGPDADIKVGNALPIKNIPVGTLLHNIEMKPGKGAQLVRSAGGSAQLMAKEGKYATLRLPSGEMRMVHIDCRATIGQVGNLEHENINIGKAGRSRWLGIRPTVRGAVMNPNDHPHGGGEGRNPIGRNPVTPWGKPALGAKTRKKKHPSNRFIVKRRGKK.

The disordered stretch occupies residues 225 to 276 (MNPNDHPHGGGEGRNPIGRNPVTPWGKPALGAKTRKKKHPSNRFIVKRRGKK). Residues 257-276 (KTRKKKHPSNRFIVKRRGKK) show a composition bias toward basic residues.

It belongs to the universal ribosomal protein uL2 family. In terms of assembly, part of the 50S ribosomal subunit. Forms a bridge to the 30S subunit in the 70S ribosome.

Functionally, one of the primary rRNA binding proteins. Required for association of the 30S and 50S subunits to form the 70S ribosome, for tRNA binding and peptide bond formation. It has been suggested to have peptidyltransferase activity; this is somewhat controversial. Makes several contacts with the 16S rRNA in the 70S ribosome. The polypeptide is Large ribosomal subunit protein uL2 (Desulfitobacterium hafniense (strain Y51)).